A 543-amino-acid chain; its full sequence is Peptide chain release factor 3 (543 aa).

The tr-type G domain maps to 21–289 (KKRRTFAIIS…ALSDWAPSPL (269 aa)). GTP contacts are provided by residues 30 to 37 (SHPDAGKT), 98 to 102 (DTPGH), and 152 to 155 (NKLD).

The protein belongs to the TRAFAC class translation factor GTPase superfamily. Classic translation factor GTPase family. PrfC subfamily.

The protein localises to the cytoplasm. In terms of biological role, increases the formation of ribosomal termination complexes and stimulates activities of RF-1 and RF-2. It binds guanine nucleotides and has strong preference for UGA stop codons. It may interact directly with the ribosome. The stimulation of RF-1 and RF-2 is significantly reduced by GTP and GDP, but not by GMP. This is Peptide chain release factor 3 from Thiobacillus denitrificans (strain ATCC 25259 / T1).